The sequence spans 285 residues: 4-diphosphocytidyl-2-C-methyl-D-erythritol kinase (285 aa).

Lys-12 is an active-site residue. Position 95–105 (95–105 (PMGGGVGGGSS)) interacts with ATP. Asp-137 is a catalytic residue.

Belongs to the GHMP kinase family. IspE subfamily.

The enzyme catalyses 4-CDP-2-C-methyl-D-erythritol + ATP = 4-CDP-2-C-methyl-D-erythritol 2-phosphate + ADP + H(+). Its pathway is isoprenoid biosynthesis; isopentenyl diphosphate biosynthesis via DXP pathway; isopentenyl diphosphate from 1-deoxy-D-xylulose 5-phosphate: step 3/6. Catalyzes the phosphorylation of the position 2 hydroxy group of 4-diphosphocytidyl-2C-methyl-D-erythritol. This Actinobacillus pleuropneumoniae serotype 3 (strain JL03) protein is 4-diphosphocytidyl-2-C-methyl-D-erythritol kinase.